The sequence spans 82 residues: RNA-binding protein TTE2299 (82 aa).

The protein belongs to the eukaryotic ribosomal protein eL8 family.

This Caldanaerobacter subterraneus subsp. tengcongensis (strain DSM 15242 / JCM 11007 / NBRC 100824 / MB4) (Thermoanaerobacter tengcongensis) protein is RNA-binding protein TTE2299.